The sequence spans 137 residues: MSNVVQARDNSQVFGVARIYASFNDTFVHVTDLSGKETIARVTGGMKVKADRDESSPYAAMLAAQDVAAKCKEVGITAVHVKIRATGGTRTKTPGPGGQAALRALARSGLRIGRIEDVTPVPSDSTRKKGGRRGRRL.

The residue at position 2 (S2) is an N-acetylserine. The tract at residues 117 to 137 (DVTPVPSDSTRKKGGRRGRRL) is disordered. The segment covering 128 to 137 (KKGGRRGRRL) has biased composition (basic residues).

Belongs to the universal ribosomal protein uS11 family. Component of the small ribosomal subunit (SSU). Mature yeast ribosomes consist of a small (40S) and a large (60S) subunit. The 40S small subunit contains 1 molecule of ribosomal RNA (18S rRNA) and 33 different proteins (encoded by 57 genes). The large 60S subunit contains 3 rRNA molecules (25S, 5.8S and 5S rRNA) and 46 different proteins (encoded by 81 genes). uS11 interacts with eS1 forming part of the mRNA exit tunnel. uS11 interacts with snoRNA U3. uS11 interacts with MPP10. Component of the ribosomal small subunit (SSU) processome composed of at least 40 protein subunits and snoRNA U3. In terms of processing, N-terminally acetylated by acetyltransferase NatA.

It localises to the cytoplasm. The protein resides in the nucleus. It is found in the nucleolus. Its function is as follows. Component of the ribosome, a large ribonucleoprotein complex responsible for the synthesis of proteins in the cell. The small ribosomal subunit (SSU) binds messenger RNAs (mRNAs) and translates the encoded message by selecting cognate aminoacyl-transfer RNA (tRNA) molecules. The large subunit (LSU) contains the ribosomal catalytic site termed the peptidyl transferase center (PTC), which catalyzes the formation of peptide bonds, thereby polymerizing the amino acids delivered by tRNAs into a polypeptide chain. The nascent polypeptides leave the ribosome through a tunnel in the LSU and interact with protein factors that function in enzymatic processing, targeting, and the membrane insertion of nascent chains at the exit of the ribosomal tunnel. uS11 is involved in nucleolar processing of pre-18S ribosomal RNA and ribosome assembly. The polypeptide is Small ribosomal subunit protein uS11A (Saccharomyces cerevisiae (strain ATCC 204508 / S288c) (Baker's yeast)).